Consider the following 328-residue polypeptide: Interleukin-12 subunit beta (328 aa).

Residues 1–22 (MCHQQLVISWFSLVFLASPLVA) form the signal peptide. Residues 23 to 106 (IWELKKDVYV…LSHSLLLLHK (84 aa)) form the Ig-like C2-type domain. 3 cysteine pairs are disulfide-bonded: C50–C90, C131–C142, and C170–C193. An N-linked (GlcNAc...) asparagine glycan is attached at N135. Residue N222 is glycosylated (N-linked (GlcNAc...) asparagine). The Fibronectin type-III domain maps to 237–328 (PPKNLQLKPL…WSEWASVPCS (92 aa)). C300 and C327 form a disulfide bridge. C-linked (Man) tryptophan glycosylation is present at W319.

The protein belongs to the IL-12B family. In terms of assembly, heterodimer with IL12A; disulfide-linked. The heterodimer is known as interleukin IL-12. Heterodimer with IL23A; disulfide-linked. The heterodimer is known as interleukin IL-23. Also secreted as a monomer. Interacts with NBR1; this interaction promotes IL-12 secretion. Known to be C-mannosylated in the recombinant protein; it is not yet known for sure if the wild-type protein is also modified.

It is found in the secreted. Functionally, cytokine that can act as a growth factor for activated T and NK cells, enhance the lytic activity of NK/lymphokine-activated killer cells, and stimulate the production of IFN-gamma by resting PBMC. Associates with IL23A to form the IL-23 interleukin, a heterodimeric cytokine which functions in innate and adaptive immunity. IL-23 may constitute with IL-17 an acute response to infection in peripheral tissues. IL-23 binds to a heterodimeric receptor complex composed of IL12RB1 and IL23R, activates the Jak-Stat signaling cascade, stimulates memory rather than naive T-cells and promotes production of pro-inflammatory cytokines. IL-23 induces autoimmune inflammation and thus may be responsible for autoimmune inflammatory diseases and may be important for tumorigenesis. The protein is Interleukin-12 subunit beta (IL12B) of Homo sapiens (Human).